The primary structure comprises 325 residues: Gamma-hemolysin component B (325 aa).

The first 26 residues, 1–26, serve as a signal peptide directing secretion; that stretch reads MKMNKLVKSSVATSMALLLLSGTANA.

It belongs to the aerolysin family. Toxicity requires sequential binding and synergistic association of a class S and a class F component which form heterooligomeric complexes. HlgB (class F) associates with either hlgA thus forming an AB toxin or with hlgC thus forming a CB toxin. Interacts with host AMFR.

The protein resides in the secreted. In terms of biological role, toxin that seems to act by forming pores in the membrane of the cell. Has a hemolytic and a leucotoxic activity. Promotes host AMFR-mediated inflammation by mediating 'Lys-27'-linked ubiquitination of TAB3, TAK1-TAB3 complex formation and phosphorylation of TAK1/MAP3K7. In turn, activates host NF-kappa-B signaling pathway. The chain is Gamma-hemolysin component B (hlgB) from Staphylococcus aureus (strain NCTC 8325 / PS 47).